A 597-amino-acid chain; its full sequence is MKLILFLSGLVSLVLCTLAAPTGDQKEIHTETPPPKKPSETTTPGALKTPQPEPKDEEPTPGAFQGDMMLTEDQQRESKEAIDDEMTGRKKRKATIYESQRWPYKVIPYVISPSSSGQSSLIRNAMDHWEQNTCLRFEPRTSSHSRQLGHNAYLSFFRGSGCWSYVGKAFNGEQQISIGNGCAYFGTIVHEIGHAIGFHHEQSRPDRDDYINVLYQNIQSGRQHNFAKYTWGRVTSRNVEYDVGSIMHYGGYGFSSNGRPTITTRDPRLNSRLGQRIALSPADIELANLIYECDDIEDCAGANECLNGGYHDTECNCVCPSGYNGDLCEDAVTTTRPDCSERFTEMTGVITSPNWPGRYEDNMACVYQIEGPPGSTIELTFTEMNIENHAACRYDAVEVRKDDINSDGEKFCGNTLPAVQISSGNQMLISFTSDPSITGRGFRATYRIVILTTTQIPDTTTISTTTPVPTTTQATTDETVVGSCGGSFGGTQGRVATPNYPNNYDNDLECVYVIEVEIGRRVELDFIDFVLEDETNCRWDSLSINLGDGIKIDMKMCGREYPAASLVSIGNNMELTLISDRSVTDRGFMADYRAIDL.

The first 16 residues, 1 to 16 (MKLILFLSGLVSLVLC), serve as a signal peptide directing secretion. A propeptide spans 17 to 93 (TLAAPTGDQK…DEMTGRKKRK (77 aa)) (activation peptide). Residues 24 to 67 (DQKEIHTETPPPKKPSETTTPGALKTPQPEPKDEEPTPGAFQGD) are disordered. One can recognise a Peptidase M12A domain in the interval 93 to 294 (KATIYESQRW…ELANLIYECD (202 aa)). Intrachain disulfides connect Cys-134/Cys-293, Cys-162/Cys-182, Cys-299/Cys-315, Cys-305/Cys-317, Cys-319/Cys-328, Cys-339/Cys-365, Cys-392/Cys-412, Cys-484/Cys-510, and Cys-537/Cys-557. Residue His-190 coordinates Zn(2+). The active site involves Glu-191. Residues His-194 and His-200 each contribute to the Zn(2+) site. The EGF-like domain occupies 295 to 329 (DIEDCAGANECLNGGYHDTECNCVCPSGYNGDLCE). CUB domains follow at residues 339–449 (CSER…YRIV) and 484–595 (CGGS…YRAI).

Requires Zn(2+) as cofactor.

The protein localises to the cytoplasm. The protein resides in the perinuclear region. Its subcellular location is the cell cortex. It is found in the secreted. It localises to the extracellular space. Functionally, could be involved in the differentiation of ectodermal lineages and subsequent patterning of the embryo. In Paracentrotus lividus (Common sea urchin), this protein is Blastula protease 10 (BP10).